A 157-amino-acid polypeptide reads, in one-letter code: MKFPCLSFRQPYAGLILNGVKTLETRWRPLLSSVQKYTIAIHIAHKDWEDDEWQEVLMERLGMTWTQIQTLLQAGEKYGRGVIAGLIDIGETFQCPETLTAEEAVELETQAVLTNLQLKYLTQVSNPRWLLEPIPRKGGKDIFQVDIPEHLIPLEKE.

Residues 6 to 92 (LSFRQPYAGL…IAGLIDIGET (87 aa)) enclose the ASCH domain.

This sequence belongs to the EOLA family. As to quaternary structure, interacts with MT2A.

Functionally, may play a role in cell protection during the inflammatory response. In epithelial cells, negatively regulates IL6 production and apoptosis through the regulation of MT2A expression. This Mus musculus (Mouse) protein is Protein EOLA1.